The chain runs to 248 residues: 3-deoxy-manno-octulosonate cytidylyltransferase (248 aa).

It belongs to the KdsB family.

The protein resides in the cytoplasm. It catalyses the reaction 3-deoxy-alpha-D-manno-oct-2-ulosonate + CTP = CMP-3-deoxy-beta-D-manno-octulosonate + diphosphate. Its pathway is nucleotide-sugar biosynthesis; CMP-3-deoxy-D-manno-octulosonate biosynthesis; CMP-3-deoxy-D-manno-octulosonate from 3-deoxy-D-manno-octulosonate and CTP: step 1/1. It participates in bacterial outer membrane biogenesis; lipopolysaccharide biosynthesis. Activates KDO (a required 8-carbon sugar) for incorporation into bacterial lipopolysaccharide in Gram-negative bacteria. The sequence is that of 3-deoxy-manno-octulosonate cytidylyltransferase from Salmonella agona (strain SL483).